Reading from the N-terminus, the 294-residue chain is ATP synthase gamma chain (294 aa).

Belongs to the ATPase gamma chain family. As to quaternary structure, F-type ATPases have 2 components, CF(1) - the catalytic core - and CF(0) - the membrane proton channel. CF(1) has five subunits: alpha(3), beta(3), gamma(1), delta(1), epsilon(1). CF(0) has three main subunits: a, b and c.

The protein resides in the cell inner membrane. Produces ATP from ADP in the presence of a proton gradient across the membrane. The gamma chain is believed to be important in regulating ATPase activity and the flow of protons through the CF(0) complex. The chain is ATP synthase gamma chain from Nitrosomonas europaea (strain ATCC 19718 / CIP 103999 / KCTC 2705 / NBRC 14298).